A 235-amino-acid chain; its full sequence is 2-C-methyl-D-erythritol 4-phosphate cytidylyltransferase (235 aa).

It belongs to the IspD/TarI cytidylyltransferase family. IspD subfamily.

It catalyses the reaction 2-C-methyl-D-erythritol 4-phosphate + CTP + H(+) = 4-CDP-2-C-methyl-D-erythritol + diphosphate. Its pathway is isoprenoid biosynthesis; isopentenyl diphosphate biosynthesis via DXP pathway; isopentenyl diphosphate from 1-deoxy-D-xylulose 5-phosphate: step 2/6. Functionally, catalyzes the formation of 4-diphosphocytidyl-2-C-methyl-D-erythritol from CTP and 2-C-methyl-D-erythritol 4-phosphate (MEP). The chain is 2-C-methyl-D-erythritol 4-phosphate cytidylyltransferase from Pseudomonas fluorescens (strain SBW25).